Reading from the N-terminus, the 306-residue chain is MSGQYPSGYQSPSGHRGNFNSPMMQQQLNQMGVPNQMGMMGFNQGNVMQNQQQMQSGGVQSGPDIGMGQNIQQQQQPNPSQGTGQGQQQQPGQGQAQGQQQQNPQQSPQLGMAAGGQAVSSAAQSATGTVGGAPPGQPNAGPVASTQAASNVQQKEFNLLTLCRIGQETVQDIVSRFQEVFGLLRGIQPPNGTNAGLSSSNDKKAKVQEQFRTIRLLFKRLRLLYDKCNDNCQQGMEYTHVESLIPLKGEPERAEPIHTEEYKKALQENRELIEIVMLKNKQLREIIDKIRLTIWEINTMLSMRRC.

Disordered stretches follow at residues 1-22 and 51-148; these read MSGQ…FNSP and QQQM…STQA. Positions 51–128 are enriched in low complexity; sequence QQQMQSGGVQ…VSSAAQSATG (78 aa).

This sequence belongs to the Mediator complex subunit 30 family. Component of the Mediator complex.

The protein localises to the nucleus. Its function is as follows. Component of the Mediator complex, a coactivator involved in the regulated transcription of nearly all RNA polymerase II-dependent genes. Mediator functions as a bridge to convey information from gene-specific regulatory proteins to the basal RNA polymerase II transcription machinery. Mediator is recruited to promoters by direct interactions with regulatory proteins and serves as a scaffold for the assembly of a functional preinitiation complex with RNA polymerase II and the general transcription factors. In Aedes aegypti (Yellowfever mosquito), this protein is Mediator of RNA polymerase II transcription subunit 30 (MED30).